Reading from the N-terminus, the 416-residue chain is MKHRPVHERQCSTETKNWKENTQLIMQSSSGHTHHQPGSNDSPSVCMSLPVPQLSAEGSCTAGDVTIDLSSPESHHGARSSSRRVRPGNGRSLSRHGHTHSHDANGPEDANDADSREQSNSISEVFHFYKWLEKSFPYILIFSAKLVVQHITGISVGIGLLTTFLYANKCIVNQVFLRDKCSKLQCLWILVFLLFSSLLLYYTFSSQALYYSLVFMNPSLGPLHFFDALWVVGITDFIGKFFFMGLKCIILLVPSFVMSHKSKGYWYMALEEVAQCYCMLVSTPVWFRYLIDYGNQNSGAEWHFGILLALLYLILKLLIIFGQRKTSSNSLRLFLTQPNYGAAATKSQCSEVDGMCAICQAEFIKPIVLVCQHVFCEECISLWFNKEKTCPLCRTVISNQSHKWKDGATSLQLRIF.

Residues 27-45 show a composition bias toward polar residues; sequence QSSSGHTHHQPGSNDSPSV. Disordered regions lie at residues 27–50 and 63–116; these read QSSS…MSLP and GDVT…ADSR. A compositionally biased stretch (basic residues) spans 77–86; that stretch reads GARSSSRRVR. The next 6 membrane-spanning stretches (helical) occupy residues 146–166, 184–204, 214–234, 237–257, 265–287, and 302–322; these read LVVQ…TFLY, LQCL…YYTF, VFMN…VVGI, FIGK…PSFV, YWYM…PVWF, and WHFG…IIFG. The segment at 349–400 is required for ubiquitin ligase activity and for protection against ER stress-induced cell death; sequence CSEVDGMCAICQAEFIKPIVLVCQHVFCEECISLWFNKEKTCPLCRTVISNQ. The RING-type zinc finger occupies 356–394; it reads CAICQAEFIKPIVLVCQHVFCEECISLWFNKEKTCPLCR.

Its subcellular location is the endoplasmic reticulum membrane. The enzyme catalyses S-ubiquitinyl-[E2 ubiquitin-conjugating enzyme]-L-cysteine + [acceptor protein]-L-lysine = [E2 ubiquitin-conjugating enzyme]-L-cysteine + N(6)-ubiquitinyl-[acceptor protein]-L-lysine.. Its pathway is protein modification; protein ubiquitination. Functionally, E3 ubiquitin-protein ligase that acts in the endoplasmic reticulum (ER)-associated degradation (ERAD) pathway, which targets misfolded proteins that accumulate in the endoplasmic reticulum (ER) for ubiquitination and subsequent proteasome-mediated degradation. Protects cells from ER stress-induced apoptosis. The polypeptide is E3 ubiquitin-protein ligase RNFT1 (rnft1) (Xenopus tropicalis (Western clawed frog)).